Here is a 136-residue protein sequence, read N- to C-terminus: Small ribosomal subunit protein uS11c (136 aa).

This sequence belongs to the universal ribosomal protein uS11 family. As to quaternary structure, part of the 30S ribosomal subunit.

The protein localises to the plastid. This chain is Small ribosomal subunit protein uS11c, found in Epifagus virginiana (Beechdrops).